The primary structure comprises 616 residues: Coagulation factor XII (616 aa).

A signal peptide spans 1–19 (MRALLLLGILLVSLESALL). A Fibronectin type-II domain is found at 42–90 (VTGEPCHFPFQYYRQLYYKCIQRGQRGPRPWCATTPNFEKDQRWAYCLE). 13 cysteine pairs are disulfide-bonded: Cys47/Cys73, Cys61/Cys88, Cys98/Cys110, Cys104/Cys119, Cys121/Cys130, Cys135/Cys163, Cys161/Cys170, Cys178/Cys189, Cys183/Cys198, Cys200/Cys209, Cys217/Cys295, Cys238/Cys277, and Cys266/Cys290. The EGF-like 1 domain occupies 94-131 (VKDHCNKGNPCQKGGTCVNMPNGPHCICPDHFTGKHCQ). Thr109 carries an O-linked (Fuc) threonine glycan. The 41-residue stretch at 133 to 173 (EKCFEPQFLQFFQENEIWHRFEPAGVSKCQCKGPKAQCKPV) folds into the Fibronectin type-I domain. Positions 174-210 (ASQVCSTNPCLNGGSCLQTEGHRLCRCPTGYAGRLCD) constitute an EGF-like 2 domain. In terms of domain architecture, Kringle spans 216–295 (RCYSDRGLSY…SWQYCRLARC (80 aa)). N-linked (GlcNAc...) asparagine glycosylation is found at Asn249, Asn271, and Asn335. A disordered region spans residues 303–342 (PPILTPTQSPSEHQDSPLLSREPQPTTQTPSQNLTSAWCA). The segment covering 325–338 (PQPTTQTPSQNLTS) has biased composition (polar residues). 7 disulfide bridges follow: Cys358–Cys485, Cys396–Cys412, Cys404–Cys474, Cys435–Cys438, Cys501–Cys570, Cys533–Cys549, and Cys560–Cys591. Positions 372–615 (IVGGLVALPG…YLAWIQEHTT (244 aa)) constitute a Peptidase S1 domain. Residue His411 is the Charge relay system of the active site. Asn432 carries an N-linked (GlcNAc...) asparagine glycan. The active-site Charge relay system is Asp460. The Charge relay system role is filled by Ser564.

The protein belongs to the peptidase S1 family. In terms of assembly, interacts with HRG; the interaction, which is enhanced in the presence of zinc ions and inhibited by heparin-binding, inhibits factor XII autoactivation and contact-initiated coagulation. Post-translationally, O- and N-glycosylated.

The protein localises to the secreted. It carries out the reaction Selective cleavage of Arg-|-Ile bonds in factor VII to form factor VIIa and factor XI to form factor XIa.. Its activity is regulated as follows. Activity is promoted in the presence of negatively charged surfaces. Factor XII is a serum glycoprotein that participates in the initiation of blood coagulation, fibrinolysis, and the generation of bradykinin and angiotensin. Prekallikrein is cleaved by factor XII to form kallikrein, which then cleaves factor XII first to alpha-factor XIIa and then trypsin cleaves it to beta-factor XIIa. Alpha-factor XIIa activates factor XI to factor XIa. The protein is Coagulation factor XII (F12) of Sus scrofa (Pig).